The primary structure comprises 393 residues: NAD(P)H-quinone oxidoreductase subunit H, chloroplastic (393 aa).

It belongs to the complex I 49 kDa subunit family. As to quaternary structure, NDH is composed of at least 16 different subunits, 5 of which are encoded in the nucleus.

It is found in the plastid. It localises to the chloroplast thylakoid membrane. It catalyses the reaction a plastoquinone + NADH + (n+1) H(+)(in) = a plastoquinol + NAD(+) + n H(+)(out). The catalysed reaction is a plastoquinone + NADPH + (n+1) H(+)(in) = a plastoquinol + NADP(+) + n H(+)(out). NDH shuttles electrons from NAD(P)H:plastoquinone, via FMN and iron-sulfur (Fe-S) centers, to quinones in the photosynthetic chain and possibly in a chloroplast respiratory chain. The immediate electron acceptor for the enzyme in this species is believed to be plastoquinone. Couples the redox reaction to proton translocation, and thus conserves the redox energy in a proton gradient. This chain is NAD(P)H-quinone oxidoreductase subunit H, chloroplastic, found in Solanum lycopersicum (Tomato).